We begin with the raw amino-acid sequence, 89 residues long: Small ribosomal subunit protein uS15 (89 aa).

The span at 1–16 (MSVADIKKQDIVKDNG) shows a compositional bias: basic and acidic residues. The disordered stretch occupies residues 1–24 (MSVADIKKQDIVKDNGRSANDTGS).

The protein belongs to the universal ribosomal protein uS15 family. As to quaternary structure, part of the 30S ribosomal subunit. Forms a bridge to the 50S subunit in the 70S ribosome, contacting the 23S rRNA.

Its function is as follows. One of the primary rRNA binding proteins, it binds directly to 16S rRNA where it helps nucleate assembly of the platform of the 30S subunit by binding and bridging several RNA helices of the 16S rRNA. Forms an intersubunit bridge (bridge B4) with the 23S rRNA of the 50S subunit in the ribosome. The polypeptide is Small ribosomal subunit protein uS15 (Ralstonia pickettii (strain 12J)).